We begin with the raw amino-acid sequence, 248 residues long: Proteasome subunit alpha type-1 (248 aa).

The protein belongs to the peptidase T1A family. In terms of assembly, the 26S proteasome consists of a 20S proteasome core and two 19S regulatory subunits. The 20S proteasome core is composed of 28 subunits that are arranged in four stacked rings, resulting in a barrel-shaped structure. The two end rings are each formed by seven alpha subunits, and the two central rings are each formed by seven beta subunits. The catalytic chamber with the active sites is on the inside of the barrel.

It is found in the cytoplasm. The protein localises to the nucleus. The proteasome is a multicatalytic proteinase complex which is characterized by its ability to cleave peptides with Arg, Phe, Tyr, Leu, and Glu adjacent to the leaving group at neutral or slightly basic pH. The proteasome has an ATP-dependent proteolytic activity. The chain is Proteasome subunit alpha type-1 (psmA1) from Dictyostelium discoideum (Social amoeba).